The primary structure comprises 613 residues: Probable potassium transport system protein Kup 1 (613 aa).

A run of 12 helical transmembrane segments spans residues 40–60 (VLSM…VVFV), 93–113 (MLLG…TPAI), 127–147 (PALQ…LFLL), 158–178 (LFGP…LFSV), 201–221 (AVQA…AEAL), 237–257 (WFYI…ALLL), 266–286 (PFFL…ATAA), 288–308 (VIAS…AVHL), 327–347 (IYVP…VLAF), 356–376 (AYGI…TVVM), 384–404 (LPAV…FFGA), and 409–429 (VAAG…LMVT).

It belongs to the HAK/KUP transporter (TC 2.A.72) family.

The protein localises to the cell inner membrane. It carries out the reaction K(+)(in) + H(+)(in) = K(+)(out) + H(+)(out). Functionally, transport of potassium into the cell. Likely operates as a K(+):H(+) symporter. The protein is Probable potassium transport system protein Kup 1 of Ralstonia nicotianae (strain ATCC BAA-1114 / GMI1000) (Ralstonia solanacearum).